The sequence spans 240 residues: Ubiquinone biosynthesis O-methyltransferase (240 aa).

S-adenosyl-L-methionine is bound by residues R36, G60, D81, and L123.

The protein belongs to the methyltransferase superfamily. UbiG/COQ3 family.

It catalyses the reaction a 3-demethylubiquinol + S-adenosyl-L-methionine = a ubiquinol + S-adenosyl-L-homocysteine + H(+). It carries out the reaction a 3-(all-trans-polyprenyl)benzene-1,2-diol + S-adenosyl-L-methionine = a 2-methoxy-6-(all-trans-polyprenyl)phenol + S-adenosyl-L-homocysteine + H(+). It participates in cofactor biosynthesis; ubiquinone biosynthesis. O-methyltransferase that catalyzes the 2 O-methylation steps in the ubiquinone biosynthetic pathway. This is Ubiquinone biosynthesis O-methyltransferase from Rickettsia bellii (strain OSU 85-389).